The chain runs to 384 residues: Methylthioribose-1-phosphate isomerase (384 aa).

Catalysis depends on Asp255, which acts as the Proton donor.

The protein belongs to the eIF-2B alpha/beta/delta subunits family. MtnA subfamily.

It localises to the cytoplasm. It is found in the nucleus. It carries out the reaction 5-(methylsulfanyl)-alpha-D-ribose 1-phosphate = 5-(methylsulfanyl)-D-ribulose 1-phosphate. It participates in amino-acid biosynthesis; L-methionine biosynthesis via salvage pathway; L-methionine from S-methyl-5-thio-alpha-D-ribose 1-phosphate: step 1/6. Its function is as follows. Catalyzes the interconversion of methylthioribose-1-phosphate (MTR-1-P) into methylthioribulose-1-phosphate (MTRu-1-P). The polypeptide is Methylthioribose-1-phosphate isomerase (mri1) (Talaromyces marneffei (strain ATCC 18224 / CBS 334.59 / QM 7333) (Penicillium marneffei)).